The following is a 688-amino-acid chain: Chaperone protein dnaK1 (688 aa).

T198 carries the post-translational modification Phosphothreonine; by autocatalysis. A compositionally biased stretch (basic and acidic residues) spans 630–661 (DLPRDSYRERDAYNNRDYGRDYGRDYGRDSRP). The disordered stretch occupies residues 630 to 688 (DLPRDSYRERDAYNNRDYGRDYGRDYGRDSRPSYDNSRPPRKSPRPSYQDNWDDDDDWL).

This sequence belongs to the heat shock protein 70 family.

Acts as a chaperone. This Nostoc sp. (strain PCC 7120 / SAG 25.82 / UTEX 2576) protein is Chaperone protein dnaK1 (dnaK1).